The sequence spans 283 residues: Foldase protein PrsA 3 (283 aa).

Residues 1–21 form the signal peptide; sequence MKKKKLFLGTIISCVVLALSA. C22 is lipidated: N-palmitoyl cysteine. C22 carries S-diacylglycerol cysteine lipidation. Residues 132-222 enclose the PpiC domain; it reads KPEMKVSHIL…YGYHIIKVTD (91 aa).

This sequence belongs to the PrsA family.

The protein localises to the cell membrane. It carries out the reaction [protein]-peptidylproline (omega=180) = [protein]-peptidylproline (omega=0). Functionally, plays a major role in protein secretion by helping the post-translocational extracellular folding of several secreted proteins. Important for the secretion of the protective antigen. The three PsrA proteins in this organism show different but overlapping substrate specificities. This Bacillus anthracis protein is Foldase protein PrsA 3 (prsA3).